We begin with the raw amino-acid sequence, 772 residues long: U3 small nucleolar RNA-associated protein 25 homolog (772 aa).

The segment at 1 to 179 is disordered; it reads MGKRRNRGRS…SEEFTDVKHE (179 aa). Promotes p53/TP53 degradation regions lie at residues 1 to 201 and 589 to 651; these read MGKR…SQRP and VQLP…KKEE. Ser-10 carries the phosphoserine modification. Over residues 25–43 the composition is skewed to basic and acidic residues; it reads RDFGEEHPFYDRVSKKEAK. Residues Ser-52, Ser-60, and Ser-64 each carry the phosphoserine modification. Positions 54 to 70 are enriched in basic and acidic residues; that stretch reads DSSHSESESESEQEHVS. The span at 84-124 shows a compositional bias: acidic residues; the sequence is EEEEEEEEEEEEEEEEEEEEEEEEEDDSAVGDAEMNEEAGS. Low complexity predominate over residues 127 to 136; the sequence is GSVGEAAVSE. Residues 169-179 are compositionally biased toward basic and acidic residues; the sequence is SSEEFTDVKHE. The segment at 652 to 713 is represses p53/TP53 degradation; it reads LNFTHICEYT…YELPTYPHFY (62 aa).

It belongs to the UTP25 family. As to quaternary structure, interacts with CAPN3; the interaction is required for CAPN3 translocation to the nucleolus. Post-translationally, phosphorylated. Phosphorylation is required to promote p53/TP53 degradation in the nucleolus which promotes cell cycle progression and liver development. In terms of tissue distribution, expressed in all tissues tested: brain, small intestine, large intestine, stomach, liver, spleen, thymus, lung, kidney and testes (at protein level).

Its subcellular location is the nucleus. It is found in the nucleolus. In terms of biological role, component of the ribosomal small subunit processome for the biogenesis of ribosomes, functions in pre-ribosomal RNA (pre-rRNA) processing. Essential for embryonic development in part through the regulation of p53 pathway. Controls the expansion growth of digestive organs and liver. Also involved in the sympathetic neuronal development. Mediates, with CAPN3, the proteasome-independent degradation of p53/TP53. The protein is U3 small nucleolar RNA-associated protein 25 homolog of Mus musculus (Mouse).